A 696-amino-acid polypeptide reads, in one-letter code: Caprolactamase subunit alpha (696 aa).

Belongs to the HyuA family. In terms of assembly, the caprolactamase is a heterotetramer composed of two alpha subunits (CapA) and two beta subunits (CapB).

With respect to regulation, activity is dependent on the presence of ATP and bicarbonate. The requirement for bicarbonate may be related to allosteric activation through conformational effects, but it is also conceivable that carboxyphosphate is formed and acts as a mediator in caprolactam activation, forming carboxy- or phospholactim. In terms of biological role, component of a caprolactamase involved in the degradation of caprolactam, an industrial compound mainly used in the production of Nylon 6. Catalyzes the ATP-dependent hydrolysis of the caprolactam ring to form 6-aminocaproic acid (6-ACA). The alpha subunit is responsible for ATP-dependent substrate phosphorylation. The enzyme cannot use 5-oxoproline. This Pseudomonas jessenii protein is Caprolactamase subunit alpha.